A 210-amino-acid polypeptide reads, in one-letter code: Glutathione S-transferase P (210 aa).

Residues 2 to 81 (PPYTIVYFPV…HLGRSLGLYG (80 aa)) enclose the GST N-terminal domain. A Phosphotyrosine; by EGFR modification is found at tyrosine 4. Glutathione contacts are provided by residues tyrosine 8, arginine 14, tryptophan 39, lysine 45, and 52 to 53 (QL). Position 62 is a phosphothreonine (threonine 62). 65–66 (QS) is a binding site for glutathione. Residues 83–204 (DQREAALVDM…SSPDHVNRPI (122 aa)) form the GST C-terminal domain. Lysine 103 and lysine 116 each carry N6-succinyllysine. Position 128 is an N6-acetyllysine (lysine 128).

It belongs to the GST superfamily. Pi family. As to quaternary structure, homodimer. Interacts with CDK5.

It localises to the cytoplasm. It is found in the mitochondrion. The protein localises to the nucleus. It carries out the reaction RX + glutathione = an S-substituted glutathione + a halide anion + H(+). The catalysed reaction is prostaglandin J2 + glutathione = prostaglandin J2-S-(R)-glutathione. It catalyses the reaction prostaglandin J2 + glutathione = prostaglandin J2-S-(S)-glutathione. The enzyme catalyses prostaglandin A2 + glutathione = prostaglandin A2-S-(S)-glutathione. It carries out the reaction 11(S)-hydroxy-14(S),15(S)-epoxy-(5Z,8Z,12E)-eicosatrienoate + glutathione = (11S,15S)-dihydroxy-14(R)-S-glutathionyl-(5Z,8Z,12E)-eicosatrienoate. Conjugation of reduced glutathione to a wide number of exogenous and endogenous hydrophobic electrophiles. Involved in the formation of glutathione conjugates of both prostaglandin A2 (PGA2) and prostaglandin J2 (PGJ2). Participates in the formation of novel hepoxilin regioisomers. Negatively regulates CDK5 activity via p25/p35 translocation to prevent neurodegeneration. The polypeptide is Glutathione S-transferase P (GSTP1) (Cricetulus longicaudatus (Long-tailed dwarf hamster)).